Consider the following 163-residue polypeptide: Jun dimerization protein 2 (163 aa).

Disordered regions lie at residues 1–20 (MMPG…PGLG) and 58–89 (GKRP…AARC). Lys-65 participates in a covalent cross-link: Glycyl lysine isopeptide (Lys-Gly) (interchain with G-Cter in SUMO2). Residues 72–135 (EERRKRRREK…QQLILMLNRH (64 aa)) enclose the bZIP domain. A basic motif region spans residues 74-96 (RRKRRREKNKVAAARCRNKKKER). The segment at 100-128 (LQRESERLELMNAELKTQIEELKQERQQL) is leucine-zipper. Thr-148 carries the post-translational modification Phosphothreonine; by MAPK8.

This sequence belongs to the bZIP family. ATF subfamily. Forms a homodimer or heterodimer with JUN, JUNB, JUND, CEBPG and ATF2 thereby inhibiting transactivation by JUN, ATF2 and CEBPG. Binds multiple DNA elements such as cAMP-response element (CRE) and TPA response element (TRE) either as homodimer or heterodimer. Interacts with IRF2BP1. Phosphorylation of Thr-148 by MAPK8 in response to different stress conditions such as, UV irradiation, oxidatives stress and anisomycin treatments. Post-translationally, polyubiquitinated; probably by IRF2BP1.

Its subcellular location is the nucleus. Component of the AP-1 transcription factor that represses transactivation mediated by the Jun family of proteins. Involved in a variety of transcriptional responses associated with AP-1 such as UV-induced apoptosis, cell differentiation, tumorigenesis and antitumogeneris. Can also function as a repressor by recruiting histone deacetylase 3/HDAC3 to the promoter region of JUN. May control transcription via direct regulation of the modification of histones and the assembly of chromatin. The protein is Jun dimerization protein 2 (JDP2) of Homo sapiens (Human).